The primary structure comprises 167 residues: CASP-like protein 3 (167 aa).

The Cytoplasmic portion of the chain corresponds to 1 to 2 (MK). The helical transmembrane segment at 3 to 23 (IIAIAPRIGAAVLSLVAFSVM) threads the bilayer. Residues 24–48 (ASTGERRSGAGSTFKVKFSDFQAYN) lie on the Extracellular side of the membrane. Residues 49–69 (YLIALNVILFVYSTVQLVMLV) form a helical membrane-spanning segment. Over 70-80 (NSNHNSSFSSP) the chain is Cytoplasmic. A helical transmembrane segment spans residues 81–101 (FKWVLGVYICDQLLAFLLFSA). Topologically, residues 102–137 (SSSAATASELSRHGLHNIWPPACATWKLWTFCSKAE) are extracellular. Residues 138–158 (AAVAMSFLSSFFIITSSILSG) traverse the membrane as a helical segment. Over 159-167 (YHLSKVPAV) the chain is Cytoplasmic.

The protein belongs to the Casparian strip membrane proteins (CASP) family. In terms of assembly, homodimer and heterodimers.

The protein localises to the cell membrane. The sequence is that of CASP-like protein 3 from Osmunda lancea (Fern).